The following is a 335-amino-acid chain: Putative D-threonate 4-phosphate dehydrogenase (335 aa).

The substrate site is built by H140 and T141. Residues H170, H214, and H269 each contribute to the a divalent metal cation site. Positions 277 and 295 each coordinate substrate.

It belongs to the PdxA family. PdxA2 subfamily. In terms of assembly, homodimer. A divalent metal cation is required as a cofactor.

The enzyme catalyses 4-O-phospho-D-threonate + NAD(+) = dihydroxyacetone phosphate + CO2 + NADH. Functionally, catalyzes the NAD-dependent oxidation and subsequent decarboxylation of D-threonate 4-phosphate to produce dihydroxyacetone phosphate (DHAP). This Symbiobacterium thermophilum (strain DSM 24528 / JCM 14929 / IAM 14863 / T) protein is Putative D-threonate 4-phosphate dehydrogenase.